The primary structure comprises 268 residues: MHPKTGRAFRSPVEPGSGWPGDPATPQTPVAADAAQVSALAGGAGSICELNALISVCRACPRLVSWREEVAVVKRRAFADQPYWGRPVPGWGSKRPRLLILGLAPAAHGANRTGRMFTGDRSGDQLYAALHRAGLVNSPVSVDAADGLRANRIRITAPVRCAPPGNSPTPAERLTCSPWLNAEWRLVSDHIRAIVALGGFAWQVALRLAGASGTPKPRFGHGVVTELGAGVRLLGCYHPSQQNMFTGRLTPTMLDDIFREAKKLAGIE.

A disordered region spans residues 1-29; sequence MHPKTGRAFRSPVEPGSGWPGDPATPQTP. Residues Cys57, Cys60, Cys161, and Cys176 each coordinate [4Fe-4S] cluster.

This sequence belongs to the uracil-DNA glycosylase (UDG) superfamily. Type 5 (UDGb) family.

In terms of biological role, DNA glycosylase with broad substrate specificity. The polypeptide is Type-5 uracil-DNA glycosylase (Mycobacterium bovis (strain ATCC BAA-935 / AF2122/97)).